Consider the following 596-residue polypeptide: Pumilio homolog 12 (596 aa).

A PUM-HD domain is found at 254–596 (LNEDLTMSLN…KVLSALSSKK (343 aa)). 8 Pumilio repeats span residues 277–312 (EARGKIYYLAKDQHGCRFLQRIFSEKDGNDIEMIFN), 313–348 (EIIDYISELMMDPFGNYLVQKLLEVCNEDQRMQIVH), 349–388 (SITRKPGLLIKISCDMHGTRAVQKIVETAKREEEISIIIS), 389–424 (ALKHGIVHLIKNVNGNHVVQRCLQYLLPYCGKFLFE), 425–460 (AAITHCVELATDRHGCCVLQKCLGYSEGEQKQHLVS), 461–496 (EIASNALLLSQDPFGNYVLQYVFELQLQWATFEILE), 497–532 (QLEGNYTELSMQKCSSNVVEKCLKLADDKHRARIIR), and 533–570 (ELINYGRLDQVMLDPYGNYVIQAALKQSKGNVHALLVD).

Its subcellular location is the cytoplasm. It is found in the nucleus. Functionally, sequence-specific RNA-binding protein that regulates translation and mRNA stability by binding the 3'-UTR of target mRNAs. This Arabidopsis thaliana (Mouse-ear cress) protein is Pumilio homolog 12 (APUM12).